Reading from the N-terminus, the 266-residue chain is Amylovoran biosynthesis glycosyltransferase AmsE (266 aa).

Belongs to the glycosyltransferase 2 family.

It functions in the pathway glycan metabolism; exopolysaccharide biosynthesis. In terms of biological role, involved in the biosynthesis of amylovoran which functions as a virulence factor. The sequence is that of Amylovoran biosynthesis glycosyltransferase AmsE (amsE) from Erwinia amylovora (Fire blight bacteria).